A 307-amino-acid chain; its full sequence is MTPPSGVGHTTRPLRATWRDYLALTKPKVISLLLWTTLTAMFMAARGWPGLGLLVVVSLAGYMSAGSAGVFNMIIDRDIDLRMKRTATRPTSSGLISTRDAAIFGGALQVLSFGMLWVWATPLAAWMSLAGFLTYVVVYTLWLKRNTWHNIVLGGAAGCFPPLVGWAAVTGDLNLFAWFLFAIIFFWTPVHFWALALMIKDEYREVGIPMLPVVHGDRLTVAQIGLYAIYTVVLSVMPVFLGEVGWLYFLSALVLGWLLLQRSWVLYRHVMAGNKVERKVAVPLYLYSMLYLALLFVAGAVDRVLLG.

Transmembrane regions (helical) follow at residues 29–49 (VISL…RGWP), 51–71 (LGLL…AGVF), 101–120 (AAIF…WVWA), 124–143 (AAWM…TLWL), 151–171 (IVLG…AVTG), 179–199 (FLFA…ALMI), 218–238 (RLTV…SVMP), 239–259 (VFLG…GWLL), and 280–300 (VAVP…VAGA).

This sequence belongs to the UbiA prenyltransferase family. Protoheme IX farnesyltransferase subfamily.

The protein localises to the cell membrane. The catalysed reaction is heme b + (2E,6E)-farnesyl diphosphate + H2O = Fe(II)-heme o + diphosphate. The protein operates within porphyrin-containing compound metabolism; heme O biosynthesis; heme O from protoheme: step 1/1. Converts heme B (protoheme IX) to heme O by substitution of the vinyl group on carbon 2 of heme B porphyrin ring with a hydroxyethyl farnesyl side group. The chain is Protoheme IX farnesyltransferase from Deinococcus geothermalis (strain DSM 11300 / CIP 105573 / AG-3a).